The following is a 476-amino-acid chain: Cytochrome c oxidase subunit 1 (476 aa).

Residues 19-39 form a helical membrane-spanning segment; the sequence is LYYLWFSFLFGSYGFLLSVIL. Glutamate 42 lines the Ca(2+) pocket. 8 consecutive transmembrane segments (helical) span residues 61 to 81, 105 to 125, 151 to 171, 194 to 214, 240 to 260, 278 to 298, 310 to 330, and 345 to 365; these read MIFT…GLFG, ISLL…AAEF, VIIF…LNFI, LIIT…GVLM, LFWF…FGVI, MILA…HHMY, FTST…NWIC, and LLSL…VILG. Residue histidine 66 coordinates Fe(II)-heme a. Residue histidine 246 coordinates Cu cation. Residues 246–250 constitute a cross-link (1'-histidyl-3'-tyrosine (His-Tyr)); sequence HPEVY. O2 is bound at residue tyrosine 250. Histidine 295 and histidine 296 together coordinate Cu cation. Positions 374 and 375 each coordinate Mg(2+). Transmembrane regions (helical) follow at residues 379-399 and 415-435; these read VIAH…FTTV and SIVI…FLPM. Histidine 382 provides a ligand contact to heme a3. Residue histidine 384 participates in Fe(II)-heme a binding. A Ca(2+)-binding site is contributed by proline 448. The helical transmembrane segment at 455–475 threads the bilayer; that stretch reads NGWNMICSIGSTMTLFGLLIF.

The protein belongs to the heme-copper respiratory oxidase family. As to quaternary structure, component of the cytochrome c oxidase (complex IV, CIV), a multisubunit enzyme composed of a catalytic core of 3 subunits and several supernumerary subunits. The complex exists as a monomer or a dimer and forms supercomplexes (SCs) in the inner mitochondrial membrane with ubiquinol-cytochrome c oxidoreductase (cytochrome b-c1 complex, complex III, CIII). It depends on heme as a cofactor. Cu cation serves as cofactor.

Its subcellular location is the mitochondrion inner membrane. The catalysed reaction is 4 Fe(II)-[cytochrome c] + O2 + 8 H(+)(in) = 4 Fe(III)-[cytochrome c] + 2 H2O + 4 H(+)(out). It participates in energy metabolism; oxidative phosphorylation. In terms of biological role, component of the cytochrome c oxidase, the last enzyme in the mitochondrial electron transport chain which drives oxidative phosphorylation. The respiratory chain contains 3 multisubunit complexes succinate dehydrogenase (complex II, CII), ubiquinol-cytochrome c oxidoreductase (cytochrome b-c1 complex, complex III, CIII) and cytochrome c oxidase (complex IV, CIV), that cooperate to transfer electrons derived from NADH and succinate to molecular oxygen, creating an electrochemical gradient over the inner membrane that drives transmembrane transport and the ATP synthase. Cytochrome c oxidase is the component of the respiratory chain that catalyzes the reduction of oxygen to water. Electrons originating from reduced cytochrome c in the intermembrane space (IMS) are transferred via the dinuclear copper A center (CU(A)) of subunit 2 and heme A of subunit 1 to the active site in subunit 1, a binuclear center (BNC) formed by heme A3 and copper B (CU(B)). The BNC reduces molecular oxygen to 2 water molecules using 4 electrons from cytochrome c in the IMS and 4 protons from the mitochondrial matrix. The protein is Cytochrome c oxidase subunit 1 (MT-CO1) of Plasmodium falciparum.